Reading from the N-terminus, the 306-residue chain is Dihydroorotate dehydrogenase B (NAD(+)), catalytic subunit (306 aa).

FMN-binding positions include Ser-22 and 46-47 (KG). Residues Lys-46 and 70–74 (NAIGL) contribute to the substrate site. FMN is bound by residues Asn-100 and Asn-128. Asn-128 provides a ligand contact to substrate. Cys-131 (nucleophile) is an active-site residue. Positions 167 and 193 each coordinate FMN. Residue 194 to 195 (NT) coordinates substrate. Residues Gly-219, 245 to 246 (GG), and 267 to 268 (GT) each bind FMN.

Belongs to the dihydroorotate dehydrogenase family. Type 1 subfamily. As to quaternary structure, heterotetramer of 2 PyrK and 2 PyrD type B subunits. FMN is required as a cofactor.

The protein localises to the cytoplasm. The catalysed reaction is (S)-dihydroorotate + NAD(+) = orotate + NADH + H(+). It participates in pyrimidine metabolism; UMP biosynthesis via de novo pathway; orotate from (S)-dihydroorotate (NAD(+) route): step 1/1. Its function is as follows. Catalyzes the conversion of dihydroorotate to orotate with NAD(+) as electron acceptor. The protein is Dihydroorotate dehydrogenase B (NAD(+)), catalytic subunit (pyrD) of Solidesulfovibrio magneticus (strain ATCC 700980 / DSM 13731 / RS-1) (Desulfovibrio magneticus).